We begin with the raw amino-acid sequence, 340 residues long: Phenylalanine--tRNA ligase alpha subunit (340 aa).

Glutamate 255 lines the Mg(2+) pocket.

This sequence belongs to the class-II aminoacyl-tRNA synthetase family. Phe-tRNA synthetase alpha subunit type 1 subfamily. As to quaternary structure, tetramer of two alpha and two beta subunits. Mg(2+) is required as a cofactor.

Its subcellular location is the cytoplasm. The catalysed reaction is tRNA(Phe) + L-phenylalanine + ATP = L-phenylalanyl-tRNA(Phe) + AMP + diphosphate + H(+). The sequence is that of Phenylalanine--tRNA ligase alpha subunit from Desulforamulus reducens (strain ATCC BAA-1160 / DSM 100696 / MI-1) (Desulfotomaculum reducens).